We begin with the raw amino-acid sequence, 368 residues long: 3-dehydroquinate synthase (368 aa).

NAD(+)-binding positions include 71-76 (DGEAFK), 105-109 (GVVGD), 129-130 (TT), K142, K151, and 169-172 (TLRT). Zn(2+) contacts are provided by E184, H247, and H264.

It belongs to the sugar phosphate cyclases superfamily. Dehydroquinate synthase family. Requires Co(2+) as cofactor. The cofactor is Zn(2+). It depends on NAD(+) as a cofactor.

Its subcellular location is the cytoplasm. It catalyses the reaction 7-phospho-2-dehydro-3-deoxy-D-arabino-heptonate = 3-dehydroquinate + phosphate. It participates in metabolic intermediate biosynthesis; chorismate biosynthesis; chorismate from D-erythrose 4-phosphate and phosphoenolpyruvate: step 2/7. Catalyzes the conversion of 3-deoxy-D-arabino-heptulosonate 7-phosphate (DAHP) to dehydroquinate (DHQ). The chain is 3-dehydroquinate synthase from Cupriavidus necator (strain ATCC 17699 / DSM 428 / KCTC 22496 / NCIMB 10442 / H16 / Stanier 337) (Ralstonia eutropha).